The primary structure comprises 377 residues: 2-iminoacetate synthase (377 aa).

A Radical SAM core domain is found at 71-301 (NTVSFYVPLY…PEIELSLSTR (231 aa)). Residues C85, C89, and C92 each contribute to the [4Fe-4S] cluster site.

It belongs to the radical SAM superfamily. ThiH family. Forms a heterodimer with ThiG. [4Fe-4S] cluster serves as cofactor.

The catalysed reaction is L-tyrosine + S-adenosyl-L-methionine + NADPH = 2-iminoacetate + 4-methylphenol + 5'-deoxyadenosine + L-methionine + NADP(+). Its pathway is cofactor biosynthesis; thiamine diphosphate biosynthesis. In terms of biological role, catalyzes the radical-mediated cleavage of tyrosine to 2-iminoacetate and 4-cresol. The sequence is that of 2-iminoacetate synthase (thiH) from Escherichia coli (strain K12).